The primary structure comprises 675 residues: UvrABC system protein B (675 aa).

A Helicase ATP-binding domain is found at 32-417 (EGLSDGLAYQ…EHAGQVVEQV (386 aa)). 45–52 (GVTGSGKT) contacts ATP. The short motif at 98–121 (YYDYYQPEAYVPSRDLFIEKDSAI) is the Beta-hairpin element. The 167-residue stretch at 436 to 602 (QVDDLMSEIN…QIKKQVKDII (167 aa)) folds into the Helicase C-terminal domain. Residues 634-669 (IKEIAKLEKAMQQAARDLQFEEAAVLRDRIRNIKEN) enclose the UVR domain.

It belongs to the UvrB family. Forms a heterotetramer with UvrA during the search for lesions. Interacts with UvrC in an incision complex.

Its subcellular location is the cytoplasm. The UvrABC repair system catalyzes the recognition and processing of DNA lesions. A damage recognition complex composed of 2 UvrA and 2 UvrB subunits scans DNA for abnormalities. Upon binding of the UvrA(2)B(2) complex to a putative damaged site, the DNA wraps around one UvrB monomer. DNA wrap is dependent on ATP binding by UvrB and probably causes local melting of the DNA helix, facilitating insertion of UvrB beta-hairpin between the DNA strands. Then UvrB probes one DNA strand for the presence of a lesion. If a lesion is found the UvrA subunits dissociate and the UvrB-DNA preincision complex is formed. This complex is subsequently bound by UvrC and the second UvrB is released. If no lesion is found, the DNA wraps around the other UvrB subunit that will check the other stand for damage. This Neisseria gonorrhoeae protein is UvrABC system protein B.